A 76-amino-acid polypeptide reads, in one-letter code: Acyl carrier protein (76 aa).

The Carrier domain maps to 1-76 (MSLEEKVKNI…DVIEYIKAHT (76 aa)). Residue S36 is modified to O-(pantetheine 4'-phosphoryl)serine.

This sequence belongs to the acyl carrier protein (ACP) family. 4'-phosphopantetheine is transferred from CoA to a specific serine of apo-ACP by AcpS. This modification is essential for activity because fatty acids are bound in thioester linkage to the sulfhydryl of the prosthetic group.

The protein resides in the cytoplasm. It functions in the pathway lipid metabolism; fatty acid biosynthesis. Carrier of the growing fatty acid chain in fatty acid biosynthesis. The protein is Acyl carrier protein of Desulfatibacillum aliphaticivorans.